Reading from the N-terminus, the 504-residue chain is Galactan beta-1,4-galactosyltransferase GALS3 (504 aa).

Residues Leu-30–Ser-50 traverse the membrane as a helical segment. In terms of domain architecture, GT92 spans Asp-242–Glu-456.

The protein belongs to the glycosyltransferase 92 family. As to expression, expressed in root caps, mature leaves, top of the stems and seeds.

Its subcellular location is the golgi apparatus membrane. Functionally, involved in the biosynthesis of beta-1,4-galactan. Beta-1,4-galactans are abundant polysaccharides in plant cell walls and are found as side-chain of rhamnogalacturonan I, which is a major component of pectin. This chain is Galactan beta-1,4-galactosyltransferase GALS3, found in Arabidopsis thaliana (Mouse-ear cress).